The chain runs to 191 residues: PBAN-type neuropeptides (191 aa).

The signal sequence occupies residues 1–17; it reads MFSPLLFFAVSISCVLA. At Leu44 the chain carries Leucine amide. Residues 48–91 constitute a propeptide that is removed on maturation; that stretch reads SLRISTEDNRQAFFKLLEAADALKYYYDRLPYEMQADEPETRVT. Leucine amide is present on residues Leu100, Leu120, Leu156, and Leu166. A propeptide spanning residues 169–191 is cleaved from the precursor; it reads ELSYDMLPSKLRLVRSTNRTQST.

It belongs to the pyrokinin family. As to expression, expressed in the subesophageal ganglion.

It localises to the secreted. Its function is as follows. A hormone that controls sex pheromone production in females and pheromone responsiveness in male. This chain is PBAN-type neuropeptides, found in Spodoptera littoralis (Egyptian cotton leafworm).